We begin with the raw amino-acid sequence, 590 residues long: Cationic amino acid transporter 8, vacuolar (590 aa).

At 1-85 (MIPASMEEAH…ESENPMRRCL (85 aa)) the chain is on the cytoplasmic side. A helical membrane pass occupies residues 86–106 (TWWDLLWLSFGSVVGSGVFVI). The Vacuolar portion of the chain corresponds to 107–114 (TGQEARVG). Residues 115–135 (AGPAVVLSYAISGVSALLSVL) form a helical membrane-spanning segment. At 136-160 (CYAEFGVEIPVAGGSFSYLRVELGD) the chain is on the cytoplasmic side. A helical transmembrane segment spans residues 161–181 (FIAFIAAGNILLEAMVGAAGL). The Vacuolar portion of the chain corresponds to 182–209 (GRSWSSYLASLVKNDSDYFRIKVDSFAK). Asn-195 is a glycosylation site (N-linked (GlcNAc...) asparagine). A helical membrane pass occupies residues 210–230 (GFDLLDPVAVAVLLVANGIAM). Topologically, residues 231-238 (TGTKRTSW) are cytoplasmic. The chain crosses the membrane as a helical span at residues 239–259 (LNLITSMVTVCIIVFIVVVGF). Topologically, residues 260-266 (THSKTSN) are vacuolar. The chain crosses the membrane as a helical span at residues 267–287 (LVPFFPYGAKGVVQSAAVVYW). The Cytoplasmic segment spans residues 288 to 310 (SYTGFDMVANMAEETEKPSRDIP). The chain crosses the membrane as a helical span at residues 311 to 331 (IGLVGSMSMITVVYCLMALAL). Residues 332–359 (TMMVKYTEIDANAAYSVAFAQIGMKWAK) are Vacuolar-facing. A helical transmembrane segment spans residues 360 to 380 (YLVGICALKGMTTSLLVGSLG). The Cytoplasmic portion of the chain corresponds to 381 to 407 (QARYTTQIARSHMIPPWFALVHPKTGT). The chain crosses the membrane as a helical span at residues 408 to 428 (PIYATLLVTILSSIISFFTSL). Residue Glu-429 is a topological domain, vacuolar. A helical membrane pass occupies residues 430 to 450 (VLSSVFSFATLFIFMLVAVAL). The Cytoplasmic portion of the chain corresponds to 451-465 (LVRRYYVKDVTPEAG). A helical transmembrane segment spans residues 466–486 (LLKFLGFLFLIIASSIGVSAL). Residues 487 to 493 (WNSGVKG) are Vacuolar-facing. Residues 494–514 (WIAYTVTGVIWFIGTLGLALL) form a helical membrane-spanning segment. Residues 515 to 522 (PKYRVPKV) lie on the Cytoplasmic side of the membrane. Residues 523-543 (WGVPLVPWLPSFSIAMNLFLI) traverse the membrane as a helical segment. The Vacuolar segment spans residues 544–553 (GSLGYVAFLR). The chain crosses the membrane as a helical span at residues 554 to 574 (FIICTMVMLLYYLFVGLHATY). The Cytoplasmic segment spans residues 575–590 (DVAHQPLEEAKFEGER).

This sequence belongs to the amino acid-polyamine-organocation (APC) superfamily. Cationic amino acid transporter (CAT) (TC 2.A.3.3) family. In terms of tissue distribution, expressed in roots, stems, flowers and leaves. Mostly present in young and rapidly dividing tissues such as the shoot and root apical meristem, and in young leaves and petioles during seedling development.

Its subcellular location is the cell membrane. Its function is as follows. Permease involved in the transport of the cationic neutral or acidic amino acids. This is Cationic amino acid transporter 8, vacuolar (CAT8) from Arabidopsis thaliana (Mouse-ear cress).